Consider the following 556-residue polypeptide: Glutamine--tRNA ligase (556 aa).

The 'HIGH' region motif lies at 34-44; it reads PEPNGYLHIGH. ATP-binding positions include 35 to 37 and 41 to 47; these read EPN and HIGHAKS. 2 residues coordinate L-glutamine: Asp67 and Tyr212. ATP is bound by residues Thr231, 261–262, and 269–271; these read RL and MSK. The short motif at 268 to 272 is the 'KMSKS' region element; sequence IMSKR.

The protein belongs to the class-I aminoacyl-tRNA synthetase family. In terms of assembly, monomer.

It is found in the cytoplasm. It carries out the reaction tRNA(Gln) + L-glutamine + ATP = L-glutaminyl-tRNA(Gln) + AMP + diphosphate. This chain is Glutamine--tRNA ligase, found in Sodalis glossinidius (strain morsitans).